A 203-amino-acid polypeptide reads, in one-letter code: Glycerol-3-phosphate acyltransferase (203 aa).

6 helical membrane-spanning segments follow: residues 3 to 23 (ILLA…VVVS), 51 to 71 (KAAI…VWLV), 74 to 94 (FGIG…LGHL), 116 to 136 (AVHP…AFFF), 140 to 160 (SLAA…LFGT), and 164 to 178 (PVAW…LLIW).

The protein belongs to the PlsY family. In terms of assembly, probably interacts with PlsX.

Its subcellular location is the cell inner membrane. It catalyses the reaction an acyl phosphate + sn-glycerol 3-phosphate = a 1-acyl-sn-glycero-3-phosphate + phosphate. It functions in the pathway lipid metabolism; phospholipid metabolism. In terms of biological role, catalyzes the transfer of an acyl group from acyl-phosphate (acyl-PO(4)) to glycerol-3-phosphate (G3P) to form lysophosphatidic acid (LPA). This enzyme utilizes acyl-phosphate as fatty acyl donor, but not acyl-CoA or acyl-ACP. The protein is Glycerol-3-phosphate acyltransferase of Burkholderia pseudomallei (strain 1710b).